The sequence spans 202 residues: Histone chaperone ASF1B (202 aa).

The tract at residues 1–156 (MAKVSVLNVA…TRFHINWDNN (156 aa)) is interaction with histone H3 and CHAF1B. The residue at position 198 (S198) is a Phosphoserine; by TLK2.

This sequence belongs to the ASF1 family. As to quaternary structure, interacts with histone H3 (via C-terminus), including histone H3.1, H3.2 and H3.3, and histone H4; the interaction with H3 is direct. Interacts with the CHAF1A, CHAF1B and RBBP4 subunits of the CAF-1 complex. Interacts with HAT1, NASP and TAF1. Found in a soluble complex with NASP and histones H3 and H4; the interaction with NASP is probably indirect and mediated by H3-H4. Interacts with CDAN1. Found in a cytosolic complex with CDAN1, ASF1A, IPO4 and histones H3.1 and H4. Interacts with CREBBP. In terms of processing, phosphorylated by TLK2. Phosphorylated by TLK1. Highly expressed in germ cells. Restricted to premeiotic to meiotic stages during spermatogenesis.

The protein resides in the nucleus. The protein localises to the cytoplasm. It is found in the cytosol. In terms of biological role, histone chaperone that facilitates histone deposition and histone exchange and removal during nucleosome assembly and disassembly. Cooperates with chromatin assembly factor 1 (CAF-1) to promote replication-dependent chromatin assembly. Also involved in the nuclear import of the histone H3-H4 dimer together with importin-4 (IPO4): specifically recognizes and binds newly synthesized histones with the monomethylation of H3 'Lys-9' (H3K9me1) and diacetylation at 'Lys-5' and 'Lys-12' of H4 (H4K5ac and H4K12ac) marks in the cytosol. Does not participate in replication-independent nucleosome deposition which is mediated by ASF1A and HIRA. Required for gonad development. In Mus musculus (Mouse), this protein is Histone chaperone ASF1B.